Reading from the N-terminus, the 269-residue chain is Hydroxyacylglutathione hydrolase (269 aa).

The Zn(2+) site is built by His56, His58, Asp60, His61, His115, Asp137, and His177.

Belongs to the metallo-beta-lactamase superfamily. Glyoxalase II family. Monomer. It depends on Zn(2+) as a cofactor.

The catalysed reaction is an S-(2-hydroxyacyl)glutathione + H2O = a 2-hydroxy carboxylate + glutathione + H(+). It functions in the pathway secondary metabolite metabolism; methylglyoxal degradation; (R)-lactate from methylglyoxal: step 2/2. In terms of biological role, thiolesterase that catalyzes the hydrolysis of S-D-lactoyl-glutathione to form glutathione and D-lactic acid. This Leptospira borgpetersenii serovar Hardjo-bovis (strain JB197) protein is Hydroxyacylglutathione hydrolase.